We begin with the raw amino-acid sequence, 967 residues long: Probable disease resistance protein At1g61190 (967 aa).

A coiled-coil region spans residues 20 to 68 (RCLCGKGYIRNLEKNLRALQREMEDLRATQHEVQNKVAREESRHQQRLE). The disordered stretch occupies residues 132–153 (GNFDEVSQPPPRSEVEERPTQP). The NB-ARC domain maps to 138–441 (SQPPPRSEVE…CEGFIGEDQV (304 aa)). Position 180–187 (180–187 (GMGGVGKT)) interacts with ATP. LRR repeat units lie at residues 516–537 (AVRRMSLMMNEIEEITCESKCS), 538–559 (ELTTLFLQSNQLKNLSGEFIRY), 562–585 (KLVVLDLSHNPDFNELPEQISGLV), 586–608 (SLQYLDLSWTRIEQLPVGLKELK), and 609–631 (KLIFLNLCFTERLCSISGISRLL).

It belongs to the disease resistance NB-LRR family.

Its function is as follows. Probable disease resistance protein. This is Probable disease resistance protein At1g61190 from Arabidopsis thaliana (Mouse-ear cress).